The following is a 338-amino-acid chain: Anthranilate phosphoribosyltransferase (338 aa).

5-phospho-alpha-D-ribose 1-diphosphate contacts are provided by residues glycine 82, 85–86, threonine 90, 92–95, 110–118, and serine 122; these read GD, NIST, and KHGNRAASS. Glycine 82 is an anthranilate binding site. Serine 94 contacts Mg(2+). Position 113 (asparagine 113) interacts with anthranilate. Arginine 168 is a binding site for anthranilate. Mg(2+)-binding residues include aspartate 226 and glutamate 227.

It belongs to the anthranilate phosphoribosyltransferase family. Homodimer. Mg(2+) is required as a cofactor.

It catalyses the reaction N-(5-phospho-beta-D-ribosyl)anthranilate + diphosphate = 5-phospho-alpha-D-ribose 1-diphosphate + anthranilate. The protein operates within amino-acid biosynthesis; L-tryptophan biosynthesis; L-tryptophan from chorismate: step 2/5. In terms of biological role, catalyzes the transfer of the phosphoribosyl group of 5-phosphorylribose-1-pyrophosphate (PRPP) to anthranilate to yield N-(5'-phosphoribosyl)-anthranilate (PRA). This Deinococcus radiodurans (strain ATCC 13939 / DSM 20539 / JCM 16871 / CCUG 27074 / LMG 4051 / NBRC 15346 / NCIMB 9279 / VKM B-1422 / R1) protein is Anthranilate phosphoribosyltransferase.